A 165-amino-acid chain; its full sequence is Thiol peroxidase (165 aa).

In terms of domain architecture, Thioredoxin spans 18-165; sequence PAVGSPAPAF…YEAALAALGA (148 aa). Cys60 serves as the catalytic Cysteine sulfenic acid (-SOH) intermediate. A disulfide bridge links Cys60 with Cys93.

The protein belongs to the peroxiredoxin family. Tpx subfamily. Homodimer.

It carries out the reaction a hydroperoxide + [thioredoxin]-dithiol = an alcohol + [thioredoxin]-disulfide + H2O. Its function is as follows. Thiol-specific peroxidase that catalyzes the reduction of hydrogen peroxide and organic hydroperoxides to water and alcohols, respectively. Plays a role in cell protection against oxidative stress by detoxifying peroxides. This chain is Thiol peroxidase, found in Mycobacterium bovis (strain ATCC BAA-935 / AF2122/97).